We begin with the raw amino-acid sequence, 318 residues long: Methionyl-tRNA formyltransferase (318 aa).

112-115 (SILP) contacts (6S)-5,6,7,8-tetrahydrofolate.

The protein belongs to the Fmt family.

The enzyme catalyses L-methionyl-tRNA(fMet) + (6R)-10-formyltetrahydrofolate = N-formyl-L-methionyl-tRNA(fMet) + (6S)-5,6,7,8-tetrahydrofolate + H(+). In terms of biological role, attaches a formyl group to the free amino group of methionyl-tRNA(fMet). The formyl group appears to play a dual role in the initiator identity of N-formylmethionyl-tRNA by promoting its recognition by IF2 and preventing the misappropriation of this tRNA by the elongation apparatus. The chain is Methionyl-tRNA formyltransferase from Shewanella baltica (strain OS223).